The following is a 483-amino-acid chain: Cysteine proteinase 1, mitochondrial (483 aa).

The transit peptide at 1–30 (MLPTSVSRSLYLKTFRSHLLRAPQIVLKRM) directs the protein to the mitochondrion. Catalysis depends on residues Cys-102, His-398, and Asn-421. Residue Lys-483 is a propeptide, removed in mature form; by autocatalysis.

This sequence belongs to the peptidase C1 family. In terms of assembly, homohexamer. Binds to nucleic acids. Binds single-stranded DNA and RNA with higher affinity than double-stranded DNA. In terms of processing, the N-terminus of isoform Cytoplasmic is blocked.

Its subcellular location is the mitochondrion. The protein localises to the cytoplasm. The enzyme catalyses Inactivates bleomycin B2 (a cytotoxic glycometallopeptide) by hydrolysis of a carboxyamide bond of beta-aminoalanine, but also shows general aminopeptidase activity. The specificity varies somewhat with source, but amino acid arylamides of Met, Leu and Ala are preferred.. Inhibited by E64, a specific inhibitor of cysteine proteases, N-ethylmaleimide, iodacetamide, and mercury and zinc ions. Its function is as follows. The normal physiological role of the enzyme is unknown, but it is not essential for the viability of yeast cells. Has aminopeptidase activity, shortening substrate peptides sequentially by 1 amino acid. Has bleomycin hydrolase activity, which can protect the cell from the toxic effects of bleomycin. Has homocysteine-thiolactonase activity, protecting the cell against homocysteine toxicity. Acts as a repressor in the GAL4 regulatory system, but this does not require either the peptidase or nucleic acid-binding activities. In Saccharomyces cerevisiae (strain AWRI1631) (Baker's yeast), this protein is Cysteine proteinase 1, mitochondrial (LAP3).